Reading from the N-terminus, the 310-residue chain is MAPKIFIDGEHGTTGLQIRTRMAGRRDVELLSIPEAERRNAAMREDMLNSADIAILCLPDDASKEAVQMVSANNNVRVIDTSTAFRVNPGWAYGFAEMDGAQADKIKAARFVANPGCYPTGAIGLIRPLRAAGILPDGYPVTVNAVSGYTGGGKQMIAQMENPDHPDAITAPHFLYGLPLTHKHVPEMTVHGLLDRAPIFSPSVGKFAQGMIVQVPLHLDDLAEGTTMESIHAALTAHYAGQDIVTVVPLADSKALARVNAVELEGKDTMKLFVFGTPGGSQVNLVALLDNLGKGASGAAVQNMDLMLAS.

Residue C117 is part of the active site.

The protein belongs to the NAGSA dehydrogenase family. Type 2 subfamily.

The protein localises to the cytoplasm. It carries out the reaction N-acetyl-L-glutamate 5-semialdehyde + phosphate + NADP(+) = N-acetyl-L-glutamyl 5-phosphate + NADPH + H(+). The protein operates within amino-acid biosynthesis; L-arginine biosynthesis; N(2)-acetyl-L-ornithine from L-glutamate: step 3/4. In terms of biological role, catalyzes the NADPH-dependent reduction of N-acetyl-5-glutamyl phosphate to yield N-acetyl-L-glutamate 5-semialdehyde. This Rhizobium etli (strain CIAT 652) protein is N-acetyl-gamma-glutamyl-phosphate reductase.